Consider the following 446-residue polypeptide: Bifunctional protein GlmU (446 aa).

Positions 1-229 (MTEKPVALIV…EAETLGINTR (229 aa)) are pyrophosphorylase. Residues 11–14 (LAAG), K25, Q78, 83–84 (GT), 106–108 (YGD), G141, E155, N170, and N227 each bind UDP-N-acetyl-alpha-D-glucosamine. Residue D108 coordinates Mg(2+). A Mg(2+)-binding site is contributed by N227. Positions 230–250 (AELAAAEAAFQVRARARALED) are linker. The N-acetyltransferase stretch occupies residues 251–446 (GVTMTDPATV…MQALRQKKGN (196 aa)). Residues R316 and K334 each coordinate UDP-N-acetyl-alpha-D-glucosamine. The Proton acceptor role is filled by H346. UDP-N-acetyl-alpha-D-glucosamine is bound by residues Y349 and N360. Residues A363, 369–370 (NY), S388, S406, and R423 each bind acetyl-CoA.

This sequence in the N-terminal section; belongs to the N-acetylglucosamine-1-phosphate uridyltransferase family. In the C-terminal section; belongs to the transferase hexapeptide repeat family. As to quaternary structure, homotrimer. The cofactor is Mg(2+).

It is found in the cytoplasm. The enzyme catalyses alpha-D-glucosamine 1-phosphate + acetyl-CoA = N-acetyl-alpha-D-glucosamine 1-phosphate + CoA + H(+). The catalysed reaction is N-acetyl-alpha-D-glucosamine 1-phosphate + UTP + H(+) = UDP-N-acetyl-alpha-D-glucosamine + diphosphate. The protein operates within nucleotide-sugar biosynthesis; UDP-N-acetyl-alpha-D-glucosamine biosynthesis; N-acetyl-alpha-D-glucosamine 1-phosphate from alpha-D-glucosamine 6-phosphate (route II): step 2/2. Its pathway is nucleotide-sugar biosynthesis; UDP-N-acetyl-alpha-D-glucosamine biosynthesis; UDP-N-acetyl-alpha-D-glucosamine from N-acetyl-alpha-D-glucosamine 1-phosphate: step 1/1. It functions in the pathway bacterial outer membrane biogenesis; LPS lipid A biosynthesis. Catalyzes the last two sequential reactions in the de novo biosynthetic pathway for UDP-N-acetylglucosamine (UDP-GlcNAc). The C-terminal domain catalyzes the transfer of acetyl group from acetyl coenzyme A to glucosamine-1-phosphate (GlcN-1-P) to produce N-acetylglucosamine-1-phosphate (GlcNAc-1-P), which is converted into UDP-GlcNAc by the transfer of uridine 5-monophosphate (from uridine 5-triphosphate), a reaction catalyzed by the N-terminal domain. The protein is Bifunctional protein GlmU of Paracoccus denitrificans (strain Pd 1222).